The chain runs to 426 residues: Dihydropyrimidine dehydrogenase (NADP(+)), chloroplastic (426 aa).

The N-terminal 44 residues, 1-44 (MASMSFALNRFSGLSSKTTLSADFDPSSRRSFLPPTRVGLKISS), are a transit peptide targeting the chloroplast. An N-acetylalanine modification is found at Ala-45. Substrate is bound by residues Asn-129 and 188 to 190 (NFS). The active-site Nucleophile is the Cys-191. Substrate is bound at residue 256-257 (NT). The tract at residues 395–414 (VEQRKAEKRGLKSDKDWTGD) is disordered.

The protein belongs to the dihydropyrimidine dehydrogenase family. Expressed in roots, leaves, stems, siliques and flowers. Highly expressed ion dry seeds.

Its subcellular location is the plastid. The protein resides in the chloroplast. The catalysed reaction is 5,6-dihydrouracil + NADP(+) = uracil + NADPH + H(+). It participates in amino-acid biosynthesis; beta-alanine biosynthesis. Involved in pyrimidine base degradation. Catalyzes the reduction of uracil to 5,6-dihydrouracil (DHU) by using NADH as a specific cosubstrate and the reduction of thymine to 5,6-dihydrothymine (DHT). Involved in the recycling of nitrogen from nucleobases to general nitrogen metabolism. The chain is Dihydropyrimidine dehydrogenase (NADP(+)), chloroplastic from Arabidopsis thaliana (Mouse-ear cress).